Consider the following 485-residue polypeptide: Glutamate--tRNA ligase (485 aa).

A 'HIGH' region motif is present at residues 11–21; that stretch reads PSPTGLLHIGN. A 'KMSKS' region motif is present at residues 255-259; that stretch reads KLSKR. Position 258 (K258) interacts with ATP.

The protein belongs to the class-I aminoacyl-tRNA synthetase family. Glutamate--tRNA ligase type 1 subfamily. Monomer.

The protein localises to the cytoplasm. The catalysed reaction is tRNA(Glu) + L-glutamate + ATP = L-glutamyl-tRNA(Glu) + AMP + diphosphate. Catalyzes the attachment of glutamate to tRNA(Glu) in a two-step reaction: glutamate is first activated by ATP to form Glu-AMP and then transferred to the acceptor end of tRNA(Glu). This Streptococcus sanguinis (strain SK36) protein is Glutamate--tRNA ligase.